The primary structure comprises 112 residues: Large ribosomal subunit protein eL33y (112 aa).

It belongs to the eukaryotic ribosomal protein eL33 family.

This Arabidopsis thaliana (Mouse-ear cress) protein is Large ribosomal subunit protein eL33y (RPL35AC).